Consider the following 397-residue polypeptide: Phosphoglycerate kinase (397 aa).

Substrate contacts are provided by residues 19 to 21 (DFN), R35, 58 to 61 (HLGR), R117, and R150. ATP-binding positions include K201, E323, and 349-352 (GGDS).

The protein belongs to the phosphoglycerate kinase family. Monomer.

Its subcellular location is the cytoplasm. It catalyses the reaction (2R)-3-phosphoglycerate + ATP = (2R)-3-phospho-glyceroyl phosphate + ADP. It functions in the pathway carbohydrate degradation; glycolysis; pyruvate from D-glyceraldehyde 3-phosphate: step 2/5. The protein is Phosphoglycerate kinase of Syntrophobacter fumaroxidans (strain DSM 10017 / MPOB).